Reading from the N-terminus, the 232-residue chain is Enolase-phosphatase E1 (232 aa).

This sequence belongs to the HAD-like hydrolase superfamily. MasA/MtnC family. In terms of assembly, monomer. Mg(2+) serves as cofactor.

It carries out the reaction 5-methylsulfanyl-2,3-dioxopentyl phosphate + H2O = 1,2-dihydroxy-5-(methylsulfanyl)pent-1-en-3-one + phosphate. It participates in amino-acid biosynthesis; L-methionine biosynthesis via salvage pathway; L-methionine from S-methyl-5-thio-alpha-D-ribose 1-phosphate: step 3/6. The protein operates within amino-acid biosynthesis; L-methionine biosynthesis via salvage pathway; L-methionine from S-methyl-5-thio-alpha-D-ribose 1-phosphate: step 4/6. Its function is as follows. Bifunctional enzyme that catalyzes the enolization of 2,3-diketo-5-methylthiopentyl-1-phosphate (DK-MTP-1-P) into the intermediate 2-hydroxy-3-keto-5-methylthiopentenyl-1-phosphate (HK-MTPenyl-1-P), which is then dephosphorylated to form the acireductone 1,2-dihydroxy-3-keto-5-methylthiopentene (DHK-MTPene). The polypeptide is Enolase-phosphatase E1 (Xanthomonas euvesicatoria pv. vesicatoria (strain 85-10) (Xanthomonas campestris pv. vesicatoria)).